The chain runs to 266 residues: Phosphatidylglycerol--prolipoprotein diacylglyceryl transferase (266 aa).

7 helical membrane passes run 21–41, 60–80, 95–115, 124–144, 176–196, 203–223, and 236–256; these read LAIR…MWLA, LLFA…VLFY, VWTG…AMLW, FFSV…MGRM, SQLY…NIFI, GAVS…IEYF, and WISM…LLML. Position 143 (R143) interacts with a 1,2-diacyl-sn-glycero-3-phospho-(1'-sn-glycerol).

Belongs to the Lgt family.

It localises to the cell inner membrane. It catalyses the reaction L-cysteinyl-[prolipoprotein] + a 1,2-diacyl-sn-glycero-3-phospho-(1'-sn-glycerol) = an S-1,2-diacyl-sn-glyceryl-L-cysteinyl-[prolipoprotein] + sn-glycerol 1-phosphate + H(+). Its pathway is protein modification; lipoprotein biosynthesis (diacylglyceryl transfer). Functionally, catalyzes the transfer of the diacylglyceryl group from phosphatidylglycerol to the sulfhydryl group of the N-terminal cysteine of a prolipoprotein, the first step in the formation of mature lipoproteins. This Photobacterium profundum (strain SS9) protein is Phosphatidylglycerol--prolipoprotein diacylglyceryl transferase.